The primary structure comprises 1237 residues: Phosphorylase b kinase regulatory subunit alpha, skeletal muscle isoform (1237 aa).

Phosphoserine is present on residues S629, S729, S735, and S758. The calmodulin-binding stretch occupies residues 810-840; the sequence is LTELYGKVGKIRHWGLIRYISGILRKKVEAL. S972 bears the Phosphoserine; by autocatalysis mark. S981 is modified (phosphoserine). Phosphoserine; by autocatalysis is present on residues S985 and S1007. A Phosphoserine; by PKA modification is found at S1018. Phosphoserine occurs at positions 1020, 1023, and 1030. Residues 1021 to 1069 are disordered; it reads TESQPNGGHSLGADLMSPSFLSPGTSVTPSSGSFPGHHTSKDSRQGQWQ. Residues 1042–1056 are compositionally biased toward low complexity; that stretch reads SPGTSVTPSSGSFPG. The tract at residues 1060-1100 is calmodulin-binding; the sequence is SKDSRQGQWQRRRRLDGALNRVPIGFYQKVWKVLQKCHGLS. S1127 is modified (phosphoserine). The S-farnesyl cysteine moiety is linked to residue C1234.

Belongs to the phosphorylase b kinase regulatory chain family. As to quaternary structure, hexadecamer of 4 heterotetramers, each composed of alpha, beta, gamma, and delta subunits. Alpha (PHKA1 or PHKA2) and beta (PHKB) are regulatory subunits, gamma (PHKG1 or PHKG2) is the catalytic subunit, and delta is calmodulin. Post-translationally, phosphorylation of Ser-1018 by PKA stimulates the dephosphorylation of the beta subunit and, thus, reverses the initial stimulation of PHK by the faster beta-subunit phosphorylation by PKA, that occurs in muscle in response to adrenaline. Cys-1234 is farnesylated, but the C-terminal tripeptide is not removed and the cysteine carboxyl is not methylated. In terms of tissue distribution, isoform 1 predominates in muscle, heart, brain and testis. Isoforms 1 and 2 are expressed in similar quantities in the other tissues. Isoform 3 is highly expressed in slow muscle and heart.

The protein resides in the cell membrane. It functions in the pathway glycan biosynthesis; glycogen metabolism. Its activity is regulated as follows. By phosphorylation of various serine residues and by calcium. Functionally, phosphorylase b kinase catalyzes the phosphorylation of serine in certain substrates, including troponin I. The alpha chain may bind calmodulin. The chain is Phosphorylase b kinase regulatory subunit alpha, skeletal muscle isoform (PHKA1) from Oryctolagus cuniculus (Rabbit).